Reading from the N-terminus, the 486-residue chain is Vicilin-like seed storage protein At3g22640 (486 aa).

The signal sequence occupies residues 1–22; sequence MAITNKLIITLLLLISIAVVHC. Positions 34 to 60 are disordered; sequence PPQQGEQEGPRRRPGGGSGEGWEEEST. 2 Cupin type-1 domains span residues 64 to 223 and 278 to 448; these read YHFR…ELLG and FNLF…KVAE. 3 N-linked (GlcNAc...) asparagine glycosylation sites follow: asparagine 168, asparagine 316, and asparagine 455.

It belongs to the 7S seed storage protein family. In terms of tissue distribution, predominantly expressed in the embryo and endosperm of developing seeds. Also present in seedlings.

In terms of biological role, seed storage protein. Functionally, (Microbial infection) Involved in tobacco mosaic virus (TMV) replication. Required for endoplasmic reticulum (ER) aggregations mediated by TMV main replicase (P126) upon viral infection. The chain is Vicilin-like seed storage protein At3g22640 from Arabidopsis thaliana (Mouse-ear cress).